The chain runs to 291 residues: Small ribosomal subunit protein uS2 (291 aa).

The segment at 270 to 291 (NINEEANTEFEQALSDADEDKN) is disordered.

Belongs to the universal ribosomal protein uS2 family.

This Rickettsia bellii (strain OSU 85-389) protein is Small ribosomal subunit protein uS2.